A 270-amino-acid polypeptide reads, in one-letter code: MWNSGFESYGSSSYGGAGGYTQSPGGFGSPAPSQAEKKSRARAQHIVPCTISQLLSATLVDEVFRIGNVEISQVTIVGIIRHAEKAPTNIVYKIDDMTAAPMDVRQWVDTDDTSSENTVVPPETYVKVAGHLRSFQNKKSLVAFKIMPLEDMNEFTTHILEVINAHMVLSKANSQPSAGRAPISNPGMSEAGNFGGNSFMPANGLTVAQNQVLNLIKACPRPEGLNFQDLKNQLKHMSVSSIKQAVDFLSNEGHIYSTVDDDHFKSTDAE.

N-acetylmethionine is present on M1. Residues S4 and S8 each carry the phosphoserine; by PRKDC modification. At T21 the chain carries Phosphothreonine; by PRKDC. The interval 21 to 41 (TQSPGGFGSPAPSQAEKKSRA) is disordered. Position 23 is a phosphoserine; by CDK2 (S23). The residue at position 29 (S29) is a Phosphoserine; by CDK1. The residue at position 33 (S33) is a Phosphoserine; by PRKDC. Glycyl lysine isopeptide (Lys-Gly) (interchain with G-Cter in ubiquitin) cross-links involve residues K37 and K38. Residues 74 to 148 (VTIVGIIRHA…KSLVAFKIMP (75 aa)) constitute a DNA-binding region (OB). The interval 187-270 (GMSEAGNFGG…DDHFKSTDAE (84 aa)) is interaction with RAD52, TIPIN, UNG and XPA.

The protein belongs to the replication factor A protein 2 family. As to quaternary structure, component of the replication protein A complex (RPA/RP-A), a heterotrimeric complex composed of RPA1, RPA2 and RPA3. Interacts with PRPF19; the PRP19-CDC5L complex is recruited to the sites of DNA repair where it ubiquitinates the replication protein A complex (RPA). Interacts with SERTAD3. Interacts with TIPIN. Interacts with TIMELESS. Interacts with PPP4R2; the interaction is direct, DNA damage-dependent and mediates the recruitment of the PP4 catalytic subunit PPP4C. Interacts (hyperphosphorylated) with RAD51. Interacts with SMARCAL1; the interaction is direct and mediates the recruitment to the RPA complex of SMARCAL1. Interacts with RAD52 and XPA; those interactions are direct and associate RAD52 and XPA to the RPA complex. Interacts with FBH1. Interacts with ETAA1; the interaction is direct and promotes ETAA1 recruitment at stalled replication forks. Interacts with RFWD3. Interacts with DDI2. Interacts (in unphosphorylated form via N-terminus) with EIF4EBP3; the interaction enhances EIF4EBP3-mediated inhibition of EIF4E-mediated mRNA nuclear export. Interacts with BRIP1/FANCJ via the RPA1 subunit; following DNA damage they colocalize in foci in the nucleus. Interacts with nuclear UNG (isoform 2); this interaction mediates UNG recruitment to RPA-coated single-stranded DNA at stalled replication forks. In terms of processing, differentially phosphorylated throughout the cell cycle, becoming phosphorylated at the G1-S transition and dephosphorylated in late mitosis. Mainly phosphorylated at Ser-23 and Ser-29, by cyclin A-CDK2 and cyclin B-CDK1, respectively during DNA replication and mitosis. Dephosphorylation may require the serine/threonine-protein phosphatase 4. Phosphorylation at Ser-23 and Ser-29 is a prerequisite for further phosphorylation. Becomes hyperphosphorylated on additional residues including Ser-4, Ser-8, Thr-21 and Ser-33 in response to DNA damage. Hyperphosphorylation is mediated by ATM, ATR and PRKDC. Primarily recruited to DNA repair nuclear foci as a hypophosphorylated form it undergoes subsequent hyperphosphorylation, catalyzed by ATR. Hyperphosphorylation is required for RAD51 recruitment to chromatin and efficient DNA repair. Phosphorylation at Thr-21 depends upon RFWD3 presence. Post-translationally, DNA damage-induced 'Lys-63'-linked polyubiquitination by PRPF19 mediates ATRIP recruitment to the RPA complex at sites of DNA damage and activation of ATR. Ubiquitinated by RFWD3 at stalled replication forks in response to DNA damage: ubiquitination by RFWD3 does not lead to degradation by the proteasome and promotes removal of the RPA complex from stalled replication forks, promoting homologous recombination.

The protein localises to the nucleus. Its subcellular location is the PML body. Its function is as follows. As part of the heterotrimeric replication protein A complex (RPA/RP-A), binds and stabilizes single-stranded DNA intermediates that form during DNA replication or upon DNA stress. It prevents their reannealing and in parallel, recruits and activates different proteins and complexes involved in DNA metabolism. Thereby, it plays an essential role both in DNA replication and the cellular response to DNA damage. In the cellular response to DNA damage, the RPA complex controls DNA repair and DNA damage checkpoint activation. Through recruitment of ATRIP activates the ATR kinase a master regulator of the DNA damage response. It is required for the recruitment of the DNA double-strand break repair factors RAD51 and RAD52 to chromatin in response to DNA damage. Also recruits to sites of DNA damage proteins like XPA and XPG that are involved in nucleotide excision repair and is required for this mechanism of DNA repair. Also plays a role in base excision repair (BER) probably through interaction with UNG. Also recruits SMARCAL1/HARP, which is involved in replication fork restart, to sites of DNA damage. May also play a role in telomere maintenance. RPA stimulates 5'-3' helicase activity of BRIP1/FANCJ. The sequence is that of Replication protein A 32 kDa subunit (RPA2) from Homo sapiens (Human).